We begin with the raw amino-acid sequence, 464 residues long: L-2-hydroxyglutarate dehydrogenase, mitochondrial (464 aa).

The N-terminal 52 residues, 1 to 52 (MWPTLRYVGGVCGLARYCVAGGFLRASGPASGVPGLLCGGGRRSSSTSSFDI), are a transit peptide targeting the mitochondrion. An N6-acetyllysine mark is found at lysine 105 and lysine 174.

The protein belongs to the L2HGDH family. FAD is required as a cofactor.

It is found in the mitochondrion. The enzyme catalyses (S)-2-hydroxyglutarate + A = 2-oxoglutarate + AH2. The protein is L-2-hydroxyglutarate dehydrogenase, mitochondrial (L2hgdh) of Mus musculus (Mouse).